The sequence spans 429 residues: Transcriptional coactivator AacuS (429 aa).

The HTH iclR-type domain occupies 80–144 (MASQTQLLAC…GFLQEPELGH (65 aa)). A DNA-binding region (H-T-H motif) is located at residues 110-129 (IKDVAELIGVPENHICRIVR).

The protein resides in the nucleus. Its function is as follows. Transcriptional coactivator; part of the gene cluster that mediates the biosynthesis of the tetrahydroxanthone dimer secalonic acid D. The polypeptide is Transcriptional coactivator AacuS (Aspergillus aculeatus (strain ATCC 16872 / CBS 172.66 / WB 5094)).